A 145-amino-acid polypeptide reads, in one-letter code: Ribonuclease H (145 aa).

Positions 1–142 (MDTPVYLYTD…ADDLANRGAA (142 aa)) constitute an RNase H type-1 domain. Mg(2+) is bound by residues Asp-10, Glu-48, Asp-70, and Asp-134.

It belongs to the RNase H family. In terms of assembly, monomer. The cofactor is Mg(2+).

Its subcellular location is the cytoplasm. It catalyses the reaction Endonucleolytic cleavage to 5'-phosphomonoester.. Endonuclease that specifically degrades the RNA of RNA-DNA hybrids. The protein is Ribonuclease H of Neisseria meningitidis serogroup C / serotype 2a (strain ATCC 700532 / DSM 15464 / FAM18).